The following is a 427-amino-acid chain: Serine hydroxymethyltransferase (427 aa).

Residues Leu-122 and 126 to 128 (GHL) contribute to the (6S)-5,6,7,8-tetrahydrofolate site. Lys-231 bears the N6-(pyridoxal phosphate)lysine mark. 355 to 357 (SPF) contributes to the (6S)-5,6,7,8-tetrahydrofolate binding site.

The protein belongs to the SHMT family. Homodimer. Requires pyridoxal 5'-phosphate as cofactor.

The protein resides in the cytoplasm. The enzyme catalyses (6R)-5,10-methylene-5,6,7,8-tetrahydrofolate + glycine + H2O = (6S)-5,6,7,8-tetrahydrofolate + L-serine. The protein operates within one-carbon metabolism; tetrahydrofolate interconversion. It functions in the pathway amino-acid biosynthesis; glycine biosynthesis; glycine from L-serine: step 1/1. In terms of biological role, catalyzes the reversible interconversion of serine and glycine with tetrahydrofolate (THF) serving as the one-carbon carrier. This reaction serves as the major source of one-carbon groups required for the biosynthesis of purines, thymidylate, methionine, and other important biomolecules. Also exhibits THF-independent aldolase activity toward beta-hydroxyamino acids, producing glycine and aldehydes, via a retro-aldol mechanism. This is Serine hydroxymethyltransferase from Nostoc sp. (strain PCC 7120 / SAG 25.82 / UTEX 2576).